Here is a 542-residue protein sequence, read N- to C-terminus: L-ornithine N(5)-monooxygenase (542 aa).

Residues 45–53 and Q64 contribute to the FAD site; that span reads EKHEVFRWH. K69 is a binding site for substrate. 218 to 221 contacts NADP(+); it reads SGQS. Residues 263–266 and N294 contribute to the substrate site; that span reads NEIF. 294 to 296 lines the NADP(+) pocket; the sequence is NYS. Positions 443 to 472 are disordered; sequence FFHDSSPSTASSSTVSTPPTSPETSRFSSP. Low complexity predominate over residues 447–472; sequence SSPSTASSSTVSTPPTSPETSRFSSP. Residue 518-520 coordinates FAD; the sequence is TLL. Residue S521 participates in substrate binding.

Belongs to the lysine N(6)-hydroxylase/L-ornithine N(5)-oxygenase family. Homotetramer. FAD is required as a cofactor.

It carries out the reaction L-ornithine + NADPH + O2 = N(5)-hydroxy-L-ornithine + NADP(+) + H2O. It catalyses the reaction L-ornithine + NADH + O2 = N(5)-hydroxy-L-ornithine + NAD(+) + H2O. The protein operates within siderophore biosynthesis. Functionally, L-ornithine N(5)-monooxygenase; part of the gene cluster that mediates the biosynthesis of coprinoferrin, an acylated tripeptide hydroxamate siderophore. The biosynthesis of coprinoferrin depends on the hydroxylation of ornithine to N(5)-hydroxyornithine, catalyzed by the monooxygenase cpf2. The second step, the acylation of N(5)-hydroxy-L-ornithine to yield N(5)-hexanoyl-N(5)-hydroxyl-L-ornithine is catalyzed by a not yet identified acyltransferase. Finally, assembly of coprinoferrin is catalyzed by the nonribosomal peptide synthase (NRPS) cpf1 via amide bond formation between three N(5)-hexanoyl-N(5)-hydroxyl-L-ornithine molecules to release the linear trimer. Interestingly, proteins seemingly not directly related to biosynthesis, such as transcription factors, replication factors, and autophagy-related proteins, are conserved among the clusters homologous to the coprinoferrin cluster, suggesting that the cluster may also play developmental and cell biological functions. This chain is L-ornithine N(5)-monooxygenase, found in Coprinopsis cinerea (strain Okayama-7 / 130 / ATCC MYA-4618 / FGSC 9003) (Inky cap fungus).